A 669-amino-acid chain; its full sequence is Protein adenylyltransferase SelO, mitochondrial (669 aa).

A mitochondrion-targeting transit peptide spans methionine 1–glutamate 115. ATP is bound by residues glycine 153, glycine 155, lysine 176, aspartate 188, glycine 189, arginine 246, and arginine 253. The active-site Proton acceptor is the aspartate 338. Residues asparagine 339 and aspartate 348 each contribute to the Mg(2+) site. Position 348 (aspartate 348) interacts with ATP. Residues alanine 634–serine 654 form a disordered region. Threonine 635 bears the Phosphothreonine mark. Serine 653 is subject to Phosphoserine. Residue selenocysteine 667 is a non-standard amino acid, selenocysteine.

This sequence belongs to the SELO family. It depends on Mg(2+) as a cofactor.

The protein localises to the mitochondrion. It carries out the reaction L-tyrosyl-[protein] + ATP = O-(5'-adenylyl)-L-tyrosyl-[protein] + diphosphate. The enzyme catalyses L-threonyl-[protein] + ATP = 3-O-(5'-adenylyl)-L-threonyl-[protein] + diphosphate. The catalysed reaction is L-seryl-[protein] + ATP = 3-O-(5'-adenylyl)-L-seryl-[protein] + diphosphate. Functionally, catalyzes the transfer of adenosine 5'-monophosphate (AMP) to Ser, Thr and Tyr residues of target proteins (AMPylation). May be a redox-active mitochondrial selenoprotein which interacts with a redox target protein. This is Protein adenylyltransferase SelO, mitochondrial from Homo sapiens (Human).